The following is a 443-amino-acid chain: tRNA modification GTPase MnmE (443 aa).

(6S)-5-formyl-5,6,7,8-tetrahydrofolate contacts are provided by Arg-19, Glu-78, and Lys-118. The region spanning 214–366 (GFKIAIIGPT…LISKIKNKLK (153 aa)) is the TrmE-type G domain. Asn-224 is a binding site for K(+). GTP contacts are provided by residues 224–229 (NAGKSS), 243–249 (SEIAGTT), and 268–271 (DTAG). A Mg(2+)-binding site is contributed by Ser-228. Positions 243, 245, and 248 each coordinate K(+). Thr-249 is a binding site for Mg(2+). Lys-443 contacts (6S)-5-formyl-5,6,7,8-tetrahydrofolate.

It belongs to the TRAFAC class TrmE-Era-EngA-EngB-Septin-like GTPase superfamily. TrmE GTPase family. As to quaternary structure, homodimer. Heterotetramer of two MnmE and two MnmG subunits. K(+) serves as cofactor.

The protein resides in the cytoplasm. Functionally, exhibits a very high intrinsic GTPase hydrolysis rate. Involved in the addition of a carboxymethylaminomethyl (cmnm) group at the wobble position (U34) of certain tRNAs, forming tRNA-cmnm(5)s(2)U34. The polypeptide is tRNA modification GTPase MnmE (Pelagibacter ubique (strain HTCC1062)).